Here is a 199-residue protein sequence, read N- to C-terminus: dITP/XTP pyrophosphatase (199 aa).

A substrate-binding site is contributed by 8–13; it reads TSNINK. The active-site Proton acceptor is the D68. D68 lines the Mg(2+) pocket. Residues S69, 155–158, K177, and 182–183 each bind substrate; these read FGYD and HR.

This sequence belongs to the HAM1 NTPase family. In terms of assembly, homodimer. Requires Mg(2+) as cofactor.

The catalysed reaction is XTP + H2O = XMP + diphosphate + H(+). It catalyses the reaction dITP + H2O = dIMP + diphosphate + H(+). The enzyme catalyses ITP + H2O = IMP + diphosphate + H(+). Its function is as follows. Pyrophosphatase that catalyzes the hydrolysis of nucleoside triphosphates to their monophosphate derivatives, with a high preference for the non-canonical purine nucleotides XTP (xanthosine triphosphate), dITP (deoxyinosine triphosphate) and ITP. Seems to function as a house-cleaning enzyme that removes non-canonical purine nucleotides from the nucleotide pool, thus preventing their incorporation into DNA/RNA and avoiding chromosomal lesions. The chain is dITP/XTP pyrophosphatase from Borrelia duttonii (strain Ly).